A 519-amino-acid polypeptide reads, in one-letter code: 2-isopropylmalate synthase (519 aa).

The region spanning 5 to 267 (VIIFDTTLRD…YTNIHHHEIY (263 aa)) is the Pyruvate carboxyltransferase domain. Mn(2+) contacts are provided by Asp14, His202, His204, and Asn238. Positions 392–519 (ALESFHIHST…NHKNTQHIKK (128 aa)) are regulatory domain.

This sequence belongs to the alpha-IPM synthase/homocitrate synthase family. LeuA type 1 subfamily. As to quaternary structure, homodimer. It depends on Mn(2+) as a cofactor.

Its subcellular location is the cytoplasm. The catalysed reaction is 3-methyl-2-oxobutanoate + acetyl-CoA + H2O = (2S)-2-isopropylmalate + CoA + H(+). It participates in amino-acid biosynthesis; L-leucine biosynthesis; L-leucine from 3-methyl-2-oxobutanoate: step 1/4. Catalyzes the condensation of the acetyl group of acetyl-CoA with 3-methyl-2-oxobutanoate (2-ketoisovalerate) to form 3-carboxy-3-hydroxy-4-methylpentanoate (2-isopropylmalate). The chain is 2-isopropylmalate synthase from Blochmanniella floridana.